The sequence spans 206 residues: Ribosomal RNA large subunit methyltransferase E (206 aa).

S-adenosyl-L-methionine contacts are provided by Gly-63, Trp-65, Asp-83, Asp-99, and Asp-124. Catalysis depends on Lys-164, which acts as the Proton acceptor.

It belongs to the class I-like SAM-binding methyltransferase superfamily. RNA methyltransferase RlmE family.

Its subcellular location is the cytoplasm. It catalyses the reaction uridine(2552) in 23S rRNA + S-adenosyl-L-methionine = 2'-O-methyluridine(2552) in 23S rRNA + S-adenosyl-L-homocysteine + H(+). Functionally, specifically methylates the uridine in position 2552 of 23S rRNA at the 2'-O position of the ribose in the fully assembled 50S ribosomal subunit. This Buchnera aphidicola subsp. Acyrthosiphon pisum (strain APS) (Acyrthosiphon pisum symbiotic bacterium) protein is Ribosomal RNA large subunit methyltransferase E.